A 263-amino-acid chain; its full sequence is Acyl-[acyl-carrier-protein]--UDP-N-acetylglucosamine O-acyltransferase (263 aa).

Belongs to the transferase hexapeptide repeat family. LpxA subfamily. As to quaternary structure, homotrimer.

It localises to the cytoplasm. It carries out the reaction a (3R)-hydroxyacyl-[ACP] + UDP-N-acetyl-alpha-D-glucosamine = a UDP-3-O-[(3R)-3-hydroxyacyl]-N-acetyl-alpha-D-glucosamine + holo-[ACP]. The protein operates within glycolipid biosynthesis; lipid IV(A) biosynthesis; lipid IV(A) from (3R)-3-hydroxytetradecanoyl-[acyl-carrier-protein] and UDP-N-acetyl-alpha-D-glucosamine: step 1/6. Its function is as follows. Involved in the biosynthesis of lipid A, a phosphorylated glycolipid that anchors the lipopolysaccharide to the outer membrane of the cell. The chain is Acyl-[acyl-carrier-protein]--UDP-N-acetylglucosamine O-acyltransferase from Caulobacter vibrioides (strain ATCC 19089 / CIP 103742 / CB 15) (Caulobacter crescentus).